Here is a 139-residue protein sequence, read N- to C-terminus: Transcription antitermination protein NusB (139 aa).

The protein belongs to the NusB family.

Its function is as follows. Involved in transcription antitermination. Required for transcription of ribosomal RNA (rRNA) genes. Binds specifically to the boxA antiterminator sequence of the ribosomal RNA (rrn) operons. The chain is Transcription antitermination protein NusB from Pectobacterium carotovorum subsp. carotovorum (strain PC1).